The primary structure comprises 706 residues: Phenylalanine--tRNA ligase beta subunit, chloroplastic (706 aa).

The 89-residue stretch at Lys300–Thr388 folds into the B5 domain. The Mg(2+) site is built by Asp366, Asp372, Glu375, and Glu376. An FDX-ACB domain is found at Ser612–Arg705.

It belongs to the phenylalanyl-tRNA synthetase beta subunit family. Type 1 subfamily. Tetramer of two alpha and two beta subunits. It depends on Mg(2+) as a cofactor.

Its subcellular location is the plastid. The protein resides in the chloroplast. It catalyses the reaction tRNA(Phe) + L-phenylalanine + ATP = L-phenylalanyl-tRNA(Phe) + AMP + diphosphate + H(+). This Phaeodactylum tricornutum (strain CCAP 1055/1) protein is Phenylalanine--tRNA ligase beta subunit, chloroplastic.